We begin with the raw amino-acid sequence, 394 residues long: MTSLDNQGLWSEKDILKLLECMEHNIPSDDSREFKKSQADLNWSKVAFGLFSGEMCKQKWMEISYNLRKFRTLTELVQEAKFSFTKKTHKNKILTEHPDRPKRPLTAYLRFYKEQRAKYCQMYPKYSNAQLTKILAEKYRQLPAEIKQRYIMDFKKEKEDFQKKMRQFKKRHPVSGHPKKSVVPQSHPTKVPTKSQGDIKNVKSLVKTESPRTVSSDMKFQGEPRKPPMNAYHKFHQESWSSPELRHLSFRKRWVEISRRWHQVPENEKEHYSNQVKRLQKQYRVKLDLWLKRLSPEEYAAYKEAKATCGKRKNMSMSGGRSSKFGRTEQSSSEKGLQIKPGEVEELLDPGTDSSGTIQGHHDGAQSSRQDFTDDSEEDDSSTSSDSSSTDEDD.

The HMG box 1 DNA-binding region spans 101–169 (PKRPLTAYLR…DFQKKMRQFK (69 aa)). Residues 167-180 (QFKKRHPVSGHPKK) show a composition bias toward basic residues. The disordered stretch occupies residues 167–197 (QFKKRHPVSGHPKKSVVPQSHPTKVPTKSQG). Residues 183–197 (VPQSHPTKVPTKSQG) show a composition bias toward polar residues. Residues 225–291 (RKPPMNAYHK…QYRVKLDLWL (67 aa)) constitute a DNA-binding region (HMG box 2). The tract at residues 305–394 (AKATCGKRKN…SDSSSTDEDD (90 aa)) is disordered.

The protein localises to the cytoplasm. It localises to the nucleus. In terms of biological role, essential for proliferation of the inner cell mass and trophectodermal cells in peri-implantation development. In Mus musculus (Mouse), this protein is Upstream-binding factor 1-like protein 1.